Here is a 111-residue protein sequence, read N- to C-terminus: Large ribosomal subunit protein uL22 (111 aa).

It belongs to the universal ribosomal protein uL22 family. As to quaternary structure, part of the 50S ribosomal subunit.

Its function is as follows. This protein binds specifically to 23S rRNA; its binding is stimulated by other ribosomal proteins, e.g. L4, L17, and L20. It is important during the early stages of 50S assembly. It makes multiple contacts with different domains of the 23S rRNA in the assembled 50S subunit and ribosome. In terms of biological role, the globular domain of the protein is located near the polypeptide exit tunnel on the outside of the subunit, while an extended beta-hairpin is found that lines the wall of the exit tunnel in the center of the 70S ribosome. This Geotalea uraniireducens (strain Rf4) (Geobacter uraniireducens) protein is Large ribosomal subunit protein uL22.